Consider the following 409-residue polypeptide: POU domain, class 4, transcription factor 2 (409 aa).

The interval 26 to 93 (YSALHSTSPG…SEAMRRACLP (68 aa)) is disordered. The span at 31–52 (STSPGSSAPIAPSASSPSSSSN) shows a compositional bias: low complexity. A compositionally biased stretch (gly residues) spans 53–69 (AGGGGGGGGGGGGGGGR). The required for transcriptional activation stretch occupies residues 91–237 (CLPTPPSNIF…MHQAALSMAH (147 aa)). A POU-IV box motif is present at residues 110 to 119 (RAEALAAVDI). Positions 153-166 (AASSSSVPISHPSA) are enriched in low complexity. Positions 153-188 (AASSSSVPISHPSALAGTHHHHHHHHHHHHQPHQAL) are disordered. Basic residues predominate over residues 170–184 (THHHHHHHHHHHHQP). A Nuclear speckle targeting signal motif is present at residues 171–185 (HHHHHHHHHHHHQPH). The required for DNA-binding and transcriptional repression stretch occupies residues 238–409 (AHGLPSHMGC…QKRMKYSAGI (172 aa)). Residues 250-327 (DVDADPRDLE…ILQAWLEEAE (78 aa)) enclose the POU-specific domain. Residues 345–404 (KKRKRTSIAAPEKRSLEAYFAIQPRPSSEKIAAIAEKLDLKKNVVRVWFCNQRQKQKRMK) constitute a DNA-binding region (homeobox).

Belongs to the POU transcription factor family. Class-4 subfamily. As to quaternary structure, interacts with POU4F1; this interaction inhibits both POU4F1 DNA-binding and transcriptional activities. Interacts (C-terminus) with ESR1 (via DNA-binding domain); this interaction increases the estrogen receptor ESR1 transcriptional activity in a DNA- and ligand 17-beta-estradiol-independent manner. Interacts (via C-terminus) with TP53 (via N-terminus). Interacts with DLX1 (via homeobox DNA-binding domain); this interaction suppresses DLX1-mediated transcriptional activity in postnatal retina enhancing retinal ganglion cell (RGC) differentiation. Interacts with DLX2 (via homeobox DNA-binding domain); this interaction enhances RGC differentiation. Interacts (via C-terminus) with ISL1 (via C-terminus). Interacts with ISL2. Interacts with LHX2. As to expression, expressed in the brain. Expressed in the ganglion cell layer of the retina.

Its subcellular location is the nucleus. The protein localises to the nucleus speckle. It localises to the cytoplasm. Functionally, tissue-specific DNA-binding transcription factor involved in the development and differentiation of target cells. Functions either as activator or repressor modulating the rate of target gene transcription through RNA polymerase II enzyme in a promoter-dependent manner. Binds to the consensus octamer motif 5'-AT[A/T]A[T/A]T[A/T]A-3' of promoter of target genes. Plays a fundamental role in the gene regulatory network essential for retinal ganglion cell (RGC) differentiation. Binds to an octamer site to form a ternary complex with ISL1; cooperates positively with ISL1 and ISL2 to potentiate transcriptional activation of RGC target genes being involved in RGC fate commitment in the developing retina and RGC axon formation and pathfinding. Inhibits DLX1 and DLX2 transcriptional activities preventing DLX1- and DLX2-mediated ability to promote amacrine cell fate specification. In cooperation with TP53 potentiates transcriptional activation of BAX promoter activity increasing neuronal cell apoptosis. Negatively regulates BAX promoter activity in the absence of TP53. Acts as a transcriptional coactivator via its interaction with the transcription factor ESR1 by enhancing its effect on estrogen response element (ERE)-containing promoter. Antagonizes the transcriptional stimulatory activity of POU4F1 by preventing its binding to an octamer motif. Involved in TNFSF11-mediated terminal osteoclast differentiation. The sequence is that of POU domain, class 4, transcription factor 2 from Homo sapiens (Human).